The following is a 143-amino-acid chain: Large ribosomal subunit protein uL11 (143 aa).

This sequence belongs to the universal ribosomal protein uL11 family. As to quaternary structure, part of the ribosomal stalk of the 50S ribosomal subunit. Interacts with L10 and the large rRNA to form the base of the stalk. L10 forms an elongated spine to which L12 dimers bind in a sequential fashion forming a multimeric L10(L12)X complex. In terms of processing, one or more lysine residues are methylated.

Forms part of the ribosomal stalk which helps the ribosome interact with GTP-bound translation factors. In Methylibium petroleiphilum (strain ATCC BAA-1232 / LMG 22953 / PM1), this protein is Large ribosomal subunit protein uL11.